Consider the following 344-residue polypeptide: Follistatin (344 aa).

The signal sequence occupies residues 1–29; sequence MARPRHQPGGLCLLLLLLCQFMEDRSAQA. The TB domain maps to 30–103; it reads GNCWLRQAKN…TCENVDCGPG (74 aa). Disulfide bonds link cysteine 32–cysteine 55, cysteine 42–cysteine 88, cysteine 56–cysteine 91, cysteine 95–cysteine 106, cysteine 100–cysteine 116, cysteine 118–cysteine 150, cysteine 122–cysteine 143, and cysteine 132–cysteine 164. The Follistatin-like 1 domain occupies 94-117; that stretch reads TCENVDCGPGKKCRMNKKNKPRCV. 3 consecutive Kazal-like domains span residues 112–166, 186–241, and 261–318; these read NKPR…KCKK, NAYC…KCIK, and KVGR…SCNS. Asparagine 124 carries N-linked (GlcNAc...) asparagine glycosylation. Residues 167–190 enclose the Follistatin-like 2 domain; that stretch reads TCRDVFCPGSSTCVVDQTNNAYCV. Intrachain disulfides connect cysteine 192–cysteine 225, cysteine 196–cysteine 218, and cysteine 207–cysteine 239. Residues 244–268 enclose the Follistatin-like 3 domain; it reads SCDDIQCTGGKKCLWDFKVGRGRCS. Intrachain disulfides connect cysteine 270–cysteine 302, cysteine 274–cysteine 295, and cysteine 284–cysteine 316. Asparagine 288 carries N-linked (GlcNAc...) asparagine glycosylation. A disordered region spans residues 316 to 344; sequence CNSISEDTEDEEEDEDQDYSFPISSILEW. The segment covering 321–333 has biased composition (acidic residues); it reads EDTEDEEEDEDQD.

In terms of assembly, interacts with GDF11. Interacts with activin A/INHBA. Interacts with myostatin/MSTN.

It is found in the secreted. The protein localises to the nucleus. It localises to the nucleolus. Functionally, multifunctional regulatory protein whose primary function is to antagonize members of the transforming growth factor beta (TGF-beta) superfamily including activin, myostatin, GDF11 or bone morphogenetic proteins (BMPs). Mechanistically, binds to these ligands in the extracellular space, blocking their type II receptor-binding site to inhibit downstream signaling. Plays an essential role in muscle fiber formation and growth both by preventing the repressive effects of myostatin and through SMAD3/AKT/mTOR signaling independently of myostatin. Also promotes neural differentiation by antagonizing the action BMP4. Acts as a specific inhibitor of the biosynthesis and secretion of pituitary follicle stimulating hormone (FSH) by sequestering activin A/INHBA. On the other hand, translocates into the nucleus where it down-regulates rRNA synthesis and ribosome biogenesis to maintain cellular energy homeostasis by binding to rDNA. This is Follistatin from Bos taurus (Bovine).